The chain runs to 159 residues: Transcription elongation factor GreA (159 aa).

Belongs to the GreA/GreB family.

Necessary for efficient RNA polymerase transcription elongation past template-encoded arresting sites. The arresting sites in DNA have the property of trapping a certain fraction of elongating RNA polymerases that pass through, resulting in locked ternary complexes. Cleavage of the nascent transcript by cleavage factors such as GreA or GreB allows the resumption of elongation from the new 3'terminus. GreA releases sequences of 2 to 3 nucleotides. In Buchnera aphidicola subsp. Acyrthosiphon pisum (strain APS) (Acyrthosiphon pisum symbiotic bacterium), this protein is Transcription elongation factor GreA.